Consider the following 352-residue polypeptide: Neutral protease 2 (352 aa).

The N-terminal stretch at 1-19 (MRVTTLSTALFALASTAVS) is a signal peptide. Positions 20–175 (APTAGSSSPG…TKALSQLTRR (156 aa)) are excised as a propeptide. 3 cysteine pairs are disulfide-bonded: Cys-181/Cys-253, Cys-260/Cys-278, and Cys-292/Cys-352. Zn(2+) is bound at residue His-303. Glu-304 is a catalytic residue. His-307 and Asp-318 together coordinate Zn(2+).

This sequence belongs to the peptidase M35 family. The cofactor is Zn(2+).

The enzyme catalyses Preferential cleavage of bonds with hydrophobic residues in P1'. Also 3-Asn-|-Gln-4 and 8-Gly-|-Ser-9 bonds in insulin B chain.. Metalloprotease that shows high activities on basic nuclear substrates such as histone and protamine. In Aspergillus oryzae (strain ATCC 42149 / RIB 40) (Yellow koji mold), this protein is Neutral protease 2.